A 35-amino-acid polypeptide reads, in one-letter code: MGFDIHLIANFGALALITLAGPAVIFILFYRRGAL.

Residues 7–27 (LIANFGALALITLAGPAVIFI) form a helical membrane-spanning segment.

The protein belongs to the Psb30/Ycf12 family. PSII is composed of 1 copy each of membrane proteins PsbA, PsbB, PsbC, PsbD, PsbE, PsbF, PsbH, PsbI, PsbJ, PsbK, PsbL, PsbM, PsbT, PsbX, PsbY, PsbZ, Psb30/Ycf12, peripheral proteins PsbO, CyanoQ (PsbQ), PsbU, PsbV and a large number of cofactors. It forms dimeric complexes.

Its subcellular location is the cellular thylakoid membrane. A core subunit of photosystem II (PSII), probably helps stabilize the reaction center. This Synechococcus sp. (strain CC9311) protein is Photosystem II reaction center protein Psb30.